The chain runs to 450 residues: 3',5'-cyclic-AMP phosphodiesterase 7B (450 aa).

The PDEase domain maps to 97–420 (LDEDYLGQAR…AQWKSLLPRQ (324 aa)). The active-site Proton donor is His173. Positions 177, 213, 214, and 323 each coordinate a divalent metal cation. Residues 418–450 (PRQHRSRGSSGSGPDHDHAGQGTESEEQEGDSP) form a disordered region. At Ser426 the chain carries Phosphoserine. Acidic residues predominate over residues 441 to 450 (ESEEQEGDSP).

It belongs to the cyclic nucleotide phosphodiesterase family. PDE7 subfamily. The cofactor is a divalent metal cation. As to expression, highly expressed in brain. Also expressed in heart, liver, skeletal muscle and pancreas.

The enzyme catalyses 3',5'-cyclic AMP + H2O = AMP + H(+). It participates in purine metabolism; 3',5'-cyclic AMP degradation; AMP from 3',5'-cyclic AMP: step 1/1. With respect to regulation, inhibited by dipyridamole, IBMX and SCH 51866. Insensitive to zaprinast, rolipram, and milrinone. In terms of biological role, hydrolyzes the second messenger cAMP, which is a key regulator of many important physiological processes. May be involved in the control of cAMP-mediated neural activity and cAMP metabolism in the brain. This chain is 3',5'-cyclic-AMP phosphodiesterase 7B, found in Homo sapiens (Human).